The chain runs to 298 residues: Small ribosomal subunit protein uS2 (298 aa).

Composition is skewed to basic and acidic residues over residues 237–259 and 280–298; these read QSKE…DGQK and PKSE…ENKG. A disordered region spans residues 237–298; sequence QSKELDDKAD…DAAKLPENKG (62 aa).

The protein belongs to the universal ribosomal protein uS2 family.

This Neorickettsia sennetsu (strain ATCC VR-367 / Miyayama) (Ehrlichia sennetsu) protein is Small ribosomal subunit protein uS2.